Reading from the N-terminus, the 427-residue chain is Trigger factor (427 aa).

The region spanning 163-248 is the PPIase FKBP-type domain; sequence GDTVVIDFVG…IHEVKAKEVP (86 aa).

Belongs to the FKBP-type PPIase family. Tig subfamily.

It localises to the cytoplasm. The enzyme catalyses [protein]-peptidylproline (omega=180) = [protein]-peptidylproline (omega=0). Functionally, involved in protein export. Acts as a chaperone by maintaining the newly synthesized protein in an open conformation. Functions as a peptidyl-prolyl cis-trans isomerase. The chain is Trigger factor from Streptococcus pneumoniae (strain 70585).